The chain runs to 491 residues: Serine/threonine-protein kinase 3/4 (491 aa).

The segment at 1-24 (MEEVQRRQHPHPRRSLKKLSEDSL) is disordered. Over residues 7-17 (RQHPHPRRSLK) the composition is skewed to basic residues. The 252-residue stretch at 32-283 (FDVLEKLGEG…ATQLLQHPFI (252 aa)) folds into the Protein kinase domain. ATP-binding positions include 38-46 (LGEGSYGSV) and lysine 61. Aspartate 151 functions as the Proton acceptor in the catalytic mechanism. The residue at position 185 (threonine 185) is a Phosphothreonine; by autocatalysis. Residues 292–334 (LRDLITDMMEIKLKRQEEQQRDLDQDDEENSEEDDMDSGTMVR) adopt a coiled-coil conformation. Disordered stretches follow at residues 307–394 (QEEQ…IQQS) and 406–435 (EKEN…PQDG). Acidic residues predominate over residues 315–328 (DQDDEENSEEDDMD). Composition is skewed to polar residues over residues 363–373 (TLDSQMGTMVI) and 410–428 (QANS…SSDN). The SARAH domain occupies 437–484 (FESLKSWSVEELQRRLASLDPTMEQEIEEIRQRYQAKRQPILDAIDAK). Residues 442 to 475 (SWSVEELQRRLASLDPTMEQEIEEIRQRYQAKRQ) are a coiled coil.

This sequence belongs to the protein kinase superfamily. STE Ser/Thr protein kinase family. STE20 subfamily. As to quaternary structure, homodimer; mediated via the coiled-coil region. It depends on Mg(2+) as a cofactor. Post-translationally, proteolytically cleaved by caspase-3 during apoptosis at Asp-328 resulting in a 37 kDa form. Proteolytic cleavage results in kinase activation and nuclear translocation of the truncated form (MST1/N).

The protein localises to the cytoplasm. It localises to the nucleus. The enzyme catalyses L-seryl-[protein] + ATP = O-phospho-L-seryl-[protein] + ADP + H(+). It carries out the reaction L-threonyl-[protein] + ATP = O-phospho-L-threonyl-[protein] + ADP + H(+). With respect to regulation, inhibited by the C-terminal non-catalytic region. Activated by caspase-cleavage. Full activation also requires homodimerization and autophosphorylation of Thr-185. Its function is as follows. Stress-activated, pro-apoptotic kinase which, following caspase-cleavage, enters the nucleus and induces chromatin condensation followed by internucleosomal DNA fragmentation. Key component of the Hippo signaling pathway which plays a pivotal role in organ size control and tumor suppression by restricting proliferation and promoting apoptosis. The core of this pathway is composed of a kinase cascade wherein stk3/mst2 and stk4/mst1, in complex with its regulatory protein sav1, phosphorylates and activates lats1/2 in complex with its regulatory protein mob1, which in turn phosphorylates and inactivates yap1 oncoprotein and wwtr1/taz. Phosphorylation of yap1 by lats2 inhibits its translocation into the nucleus to regulate cellular genes important for cell proliferation, cell death, and cell migration. Phosphorylates 'Ser-14' of histone H2B (H2BS14ph) during apoptosis. This is Serine/threonine-protein kinase 3/4 (STK4) from Squalus acanthias (Spiny dogfish).